The following is a 278-amino-acid chain: 2-dehydro-3-deoxyphosphooctonate aldolase (278 aa).

It belongs to the KdsA family.

It localises to the cytoplasm. The enzyme catalyses D-arabinose 5-phosphate + phosphoenolpyruvate + H2O = 3-deoxy-alpha-D-manno-2-octulosonate-8-phosphate + phosphate. Its pathway is carbohydrate biosynthesis; 3-deoxy-D-manno-octulosonate biosynthesis; 3-deoxy-D-manno-octulosonate from D-ribulose 5-phosphate: step 2/3. It participates in bacterial outer membrane biogenesis; lipopolysaccharide biosynthesis. The polypeptide is 2-dehydro-3-deoxyphosphooctonate aldolase (Bartonella tribocorum (strain CIP 105476 / IBS 506)).